Reading from the N-terminus, the 468-residue chain is Aldehyde dehydrogenase family 3 member B1 (468 aa).

N-acetylmethionine is present on Met-1. Gly-188–Gly-193 serves as a coordination point for NAD(+). Catalysis depends on residues Glu-210 and Cys-244. Residues Cys-462 and Cys-463 are each lipidated (S-palmitoyl cysteine). Cys-465 bears the Cysteine methyl ester mark. Cys-465 is lipidated: S-geranylgeranyl cysteine. A propeptide spans Thr-466 to Leu-468 (removed in mature form).

The protein belongs to the aldehyde dehydrogenase family. Post-translationally, dually lipidated in the C-terminus; prenylation occurs prior to, and is a prerequisite for palmitoylation. It is also required for activity towards long-chain substrates. In terms of tissue distribution, highly expressed in kidney and liver. In brain is expressed at moderate levels in cortex, striatum and hippocampus, and at lower levels in brainstem and cerebellum.

It is found in the cell membrane. It catalyses the reaction an aldehyde + NAD(+) + H2O = a carboxylate + NADH + 2 H(+). The enzyme catalyses a long-chain fatty aldehyde + NAD(+) + H2O = a long-chain fatty acid + NADH + 2 H(+). The catalysed reaction is a medium-chain fatty aldehyde + NAD(+) + H2O = a medium-chain fatty acid + NADH + 2 H(+). It carries out the reaction octanal + NAD(+) + H2O = octanoate + NADH + 2 H(+). It catalyses the reaction nonanal + NAD(+) + H2O = nonanoate + NADH + 2 H(+). The enzyme catalyses hexadecanoate + NADH + 2 H(+) = hexadecanal + NAD(+) + H2O. The catalysed reaction is (2E)-octenal + NAD(+) + H2O = (2E)-octenoate + NADH + 2 H(+). It carries out the reaction (E)-non-2-enal + NAD(+) + H2O = (E)-non-2-enoate + NADH + 2 H(+). It catalyses the reaction (E)-4-hydroxynon-2-enal + NAD(+) + H2O = (E)-4-hydroxynon-2-enoate + NADH + 2 H(+). The enzyme catalyses (2E)-hexadecenal + NAD(+) + H2O = (E)-hexadec-2-enoate + NADH + 2 H(+). The catalysed reaction is benzaldehyde + NAD(+) + H2O = benzoate + NADH + 2 H(+). It carries out the reaction an aldehyde + NADP(+) + H2O = a carboxylate + NADPH + 2 H(+). It catalyses the reaction a medium-chain fatty aldehyde + NADP(+) + H2O = a medium-chain fatty acid + NADPH + 2 H(+). The enzyme catalyses hexanal + NADP(+) + H2O = hexanoate + NADPH + 2 H(+). The catalysed reaction is octanal + NADP(+) + H2O = octanoate + NADPH + 2 H(+). It carries out the reaction nonanal + NADP(+) + H2O = nonanoate + NADPH + 2 H(+). It catalyses the reaction (2E)-octenal + NADP(+) + H2O = (2E)-octenoate + NADPH + 2 H(+). The enzyme catalyses (E)-non-2-enal + NADP(+) + H2O = (E)-non-2-enoate + NADPH + 2 H(+). The catalysed reaction is (E)-4-hydroxynon-2-enal + NADP(+) + H2O = (E)-4-hydroxynon-2-enoate + NADPH + 2 H(+). It carries out the reaction benzaldehyde + NADP(+) + H2O = benzoate + NADPH + 2 H(+). The protein operates within alcohol metabolism; ethanol degradation; acetate from ethanol: step 2/2. Its function is as follows. Oxidizes medium and long chain saturated and unsaturated fatty aldehydes generated in the plasma membrane into non-toxic fatty acids. May have a protective role against the cytotoxicity induced by lipid peroxidation. Short-chain fatty aldehydes are not good substrates. Can use both NADP(+) and NAD(+) as electron acceptor in vitro, however in vivo preference will depend on their tissue levels. Low activity towards acetaldehyde and 3,4-dihydroxyphenylacetaldehyde. Able to metabolize aromatic aldehydes such as benzaldehyde to their acid form. This chain is Aldehyde dehydrogenase family 3 member B1 (Aldh3b1), found in Mus musculus (Mouse).